We begin with the raw amino-acid sequence, 337 residues long: Glyceraldehyde-3-phosphate dehydrogenase 1 (337 aa).

Residues 11–12, Asp-33, and Arg-78 each bind NAD(+); that span reads RI. Residues 149-151, Thr-180, 209-210, and Arg-232 each bind D-glyceraldehyde 3-phosphate; these read SCT and TG. The active-site Nucleophile is the Cys-150. Position 318 (Asn-318) interacts with NAD(+).

Belongs to the glyceraldehyde-3-phosphate dehydrogenase family. Homotetramer.

It is found in the cytoplasm. The enzyme catalyses D-glyceraldehyde 3-phosphate + phosphate + NAD(+) = (2R)-3-phospho-glyceroyl phosphate + NADH + H(+). The protein operates within carbohydrate degradation; glycolysis; pyruvate from D-glyceraldehyde 3-phosphate: step 1/5. This is Glyceraldehyde-3-phosphate dehydrogenase 1 (gpd1) from Agaricus bisporus (White button mushroom).